A 408-amino-acid polypeptide reads, in one-letter code: Guanine nucleotide-binding protein alpha-14 subunit (408 aa).

GTP-binding positions include 38-45, 78-85, 201-205, 216-222, 241-245, 285-288, 325-328, and A380; these read HSEELEAK, GGPSSGKS, NRISK, VHSRKAT, DVGGQ, FPNF, and NKVD. Residues 70–408 enclose the G-alpha domain; that stretch reads SHIKILILGG…KANSKATGLS (339 aa). The interval 73-86 is G1 motif; it reads KILILGGPSSGKST. Residue S85 participates in Mg(2+) binding. Residues 214–222 are G2 motif; the sequence is DIVHSRKAT. T222 lines the Mg(2+) pocket. Positions 237-246 are G3 motif; it reads LLMVDVGGQR. Residues 321 to 328 are G4 motif; that stretch reads LLFFNKVD. The tract at residues 378–383 is G5 motif; the sequence is TTATNT.

The protein belongs to the G-alpha family. G proteins are composed of 3 units; alpha, beta and gamma. The alpha chain contains the guanine nucleotide binding site.

Guanine nucleotide-binding proteins (G proteins) are involved as modulators or transducers in various transmembrane signaling systems. The sequence is that of Guanine nucleotide-binding protein alpha-14 subunit (gpa-14) from Caenorhabditis briggsae.